Reading from the N-terminus, the 341-residue chain is Phosphate acyltransferase (341 aa).

Belongs to the PlsX family. As to quaternary structure, homodimer. Probably interacts with PlsY.

The protein localises to the cytoplasm. The catalysed reaction is a fatty acyl-[ACP] + phosphate = an acyl phosphate + holo-[ACP]. It participates in lipid metabolism; phospholipid metabolism. Its function is as follows. Catalyzes the reversible formation of acyl-phosphate (acyl-PO(4)) from acyl-[acyl-carrier-protein] (acyl-ACP). This enzyme utilizes acyl-ACP as fatty acyl donor, but not acyl-CoA. The chain is Phosphate acyltransferase from Vibrio parahaemolyticus serotype O3:K6 (strain RIMD 2210633).